Consider the following 73-residue polypeptide: Large ribosomal subunit protein bL31 (73 aa).

The protein belongs to the bacterial ribosomal protein bL31 family. Type A subfamily. In terms of assembly, part of the 50S ribosomal subunit.

Its function is as follows. Binds the 23S rRNA. The polypeptide is Large ribosomal subunit protein bL31 (Cereibacter sphaeroides (strain ATCC 17029 / ATH 2.4.9) (Rhodobacter sphaeroides)).